The primary structure comprises 313 residues: tRNA dimethylallyltransferase (313 aa).

17-24 (GPTASGKT) is a binding site for ATP. 19 to 24 (TASGKT) is a binding site for substrate. Interaction with substrate tRNA stretches follow at residues 42–45 (DSAL), 166–170 (QRLSR), 247–252 (RCVGYR), and 280–287 (KRQITWLR).

It belongs to the IPP transferase family. Monomer. Mg(2+) is required as a cofactor.

It carries out the reaction adenosine(37) in tRNA + dimethylallyl diphosphate = N(6)-dimethylallyladenosine(37) in tRNA + diphosphate. Functionally, catalyzes the transfer of a dimethylallyl group onto the adenine at position 37 in tRNAs that read codons beginning with uridine, leading to the formation of N6-(dimethylallyl)adenosine (i(6)A). The chain is tRNA dimethylallyltransferase from Proteus mirabilis (strain HI4320).